The primary structure comprises 316 residues: MALLDDVKSELAAIDNELPIAKKAQATAMIRFGNGLHSVDHHILVQAQLDSQDAAIWLQDTIRNLYGHEATLTPVSRQTPTGVVQRFIVRVPKGSAALVLQTGLYSRYTKNMVLGLPGDIINGKIAQIKAAWRGAFLAGGHLSDPGKASYLEIVCPNHEAALALVSTARRLGITAKPRKLRSSERVTLRDPDAIERMLILMGAPHSAREWTGKRSDGEARGKANRLANFDDANMRRSAKAAAEACDKVRQAFEILGDDVPDNLKSAGQLRLDHADASLEQLGRLADPPITKDAIAGRIRRLLQLAEKTEKARRQAA.

Positions 277-310 (SLEQLGRLADPPITKDAIAGRIRRLLQLAEKTEK) form a DNA-binding region, H-T-H motif.

It belongs to the WhiA family.

In terms of biological role, involved in cell division and chromosome segregation. The chain is Probable cell division protein WhiA from Bifidobacterium adolescentis (strain ATCC 15703 / DSM 20083 / NCTC 11814 / E194a).